Reading from the N-terminus, the 896-residue chain is Serine/threonine-protein kinase TAO3 (896 aa).

In terms of domain architecture, Protein kinase spans 24–277 (FVDLHEIGHG…SLELLRHDFV (254 aa)). ATP-binding positions include 30–38 (IGHGSFGAV) and Lys-53. Residue Asp-147 is the Proton acceptor of the active site. Disordered regions lie at residues 316 to 366 (SRNG…SVNS) and 403 to 423 (DEAD…VQSQ). Over residues 334-348 (GTSLTRKMDSLGSNH) the composition is skewed to polar residues. Residues 349–366 (SIPSTSVSTGSQSSSVNS) are compositionally biased toward low complexity. A compositionally biased stretch (basic and acidic residues) spans 403 to 414 (DEADHRDPRPEL). 3 coiled-coil regions span residues 450 to 513 (EQEN…SKRQ), 545 to 650 (SFLE…LIRQ), and 752 to 873 (LKSL…IETF). The segment covering 565–587 (LNEDHSTPKKEKQERISKHKENL) has biased composition (basic and acidic residues). Residues 565–593 (LNEDHSTPKKEKQERISKHKENLQHTQAE) are disordered.

This sequence belongs to the protein kinase superfamily. STE Ser/Thr protein kinase family. STE20 subfamily.

Its subcellular location is the cytoplasm. It is found in the cell membrane. It localises to the membrane raft. The protein localises to the lipid droplet. It carries out the reaction L-seryl-[protein] + ATP = O-phospho-L-seryl-[protein] + ADP + H(+). It catalyses the reaction L-threonyl-[protein] + ATP = O-phospho-L-threonyl-[protein] + ADP + H(+). Its function is as follows. Serine/threonine-protein kinase that acts as a regulator of the p38/MAPK14 stress-activated MAPK cascade and of the MAPK8/JNK cascade. In response to DNA damage, involved in the G2/M transition DNA damage checkpoint by activating the p38/MAPK14 stress-activated MAPK cascade, probably by mediating phosphorylation of upstream MAP kinase kinases. Inhibits basal activity of the MAPK8/JNK cascade. This is Serine/threonine-protein kinase TAO3 (taok3) from Xenopus laevis (African clawed frog).